A 329-amino-acid chain; its full sequence is Ankyrin repeat and SOCS box protein 5 (329 aa).

ANK repeat units follow at residues 69 to 98 (ADRS…NVNA), 102 to 131 (DHVT…NANA), 135 to 164 (DGVT…KAQL), 167 to 196 (CFPS…DVDQ), 200 to 229 (HLGT…DVHK), and 232 to 261 (YWDT…DINA). The 52-residue stretch at 278–329 (AVERILLQHEATPSSLCQLCRLCIRNYIGRQRFHLIPQLQLPTLLQNFLQYR) folds into the SOCS box domain.

Belongs to the ankyrin SOCS box (ASB) family.

It functions in the pathway protein modification; protein ubiquitination. Functionally, may be a substrate-recognition component of a SCF-like ECS (Elongin-Cullin-SOCS-box protein) E3 ubiquitin-protein ligase complex which mediates the ubiquitination and subsequent proteasomal degradation of target proteins. May play a role in the initiation of arteriogenesis. This is Ankyrin repeat and SOCS box protein 5 (Asb5) from Mus musculus (Mouse).